The chain runs to 108 residues: FK506-binding protein 1 (108 aa).

The region spanning 20 to 108 is the PPIase FKBP-type domain; the sequence is GDAVTIHYVG…VFDVELLGIN (89 aa).

It belongs to the FKBP-type PPIase family. FKBP1 subfamily.

It localises to the cytoplasm. It carries out the reaction [protein]-peptidylproline (omega=180) = [protein]-peptidylproline (omega=0). With respect to regulation, inhibited by both FK506 and rapamycin. Its function is as follows. PPIases accelerate the folding of proteins. It catalyzes the cis-trans isomerization of proline imidic peptide bonds in oligopeptides. The chain is FK506-binding protein 1 (FPR1) from Yarrowia lipolytica (strain CLIB 122 / E 150) (Yeast).